The chain runs to 448 residues: Ribosomal protein uS12 methylthiotransferase RimO (448 aa).

Positions 7-123 (EKVSLVSLGC…IAEIIAEKEG (117 aa)) constitute an MTTase N-terminal domain. Cys-16, Cys-52, Cys-86, Cys-161, Cys-165, and Cys-168 together coordinate [4Fe-4S] cluster. The Radical SAM core domain maps to 147 to 377 (SSPYYTAYLK…MRTQARVSFK (231 aa)). A TRAM domain is found at 380–448 (RSLVDTEELV…DYDLIGEIVP (69 aa)).

It belongs to the methylthiotransferase family. RimO subfamily. [4Fe-4S] cluster serves as cofactor.

It localises to the cytoplasm. It carries out the reaction L-aspartate(89)-[ribosomal protein uS12]-hydrogen + (sulfur carrier)-SH + AH2 + 2 S-adenosyl-L-methionine = 3-methylsulfanyl-L-aspartate(89)-[ribosomal protein uS12]-hydrogen + (sulfur carrier)-H + 5'-deoxyadenosine + L-methionine + A + S-adenosyl-L-homocysteine + 2 H(+). Catalyzes the methylthiolation of an aspartic acid residue of ribosomal protein uS12. This is Ribosomal protein uS12 methylthiotransferase RimO from Geotalea uraniireducens (strain Rf4) (Geobacter uraniireducens).